The chain runs to 224 residues: uncharacterized protein (224 aa).

This is an uncharacterized protein from Bacillus anthracis.